Reading from the N-terminus, the 237-residue chain is MSQPFFQFKQFTVWHDKCAMKVGTDGVLLGAWTPVESSARILDIGTGTGLVALMLAQRCSASVIALEIDGTAAQQAAENITRSPWGSRIEVVCQDFRLYSNKNNSLKYDTIVSNPPYFTDSLKCPDSQRNTARHNDNLSYEELLKGVSNLLSPNGTFTVVIPMDASDSFKDIASSQGLYPSRQLLVITKPGAPPKRTLISFTFIKQDCKEEKLLTEVSRHRYSDEYIKLTREFYLKM.

This sequence belongs to the methyltransferase superfamily. tRNA (adenine-N(6)-)-methyltransferase family.

It localises to the cytoplasm. The enzyme catalyses adenosine(37) in tRNA1(Val) + S-adenosyl-L-methionine = N(6)-methyladenosine(37) in tRNA1(Val) + S-adenosyl-L-homocysteine + H(+). In terms of biological role, specifically methylates the adenine in position 37 of tRNA(1)(Val) (anticodon cmo5UAC). This chain is tRNA1(Val) (adenine(37)-N6)-methyltransferase, found in Bacteroides fragilis (strain ATCC 25285 / DSM 2151 / CCUG 4856 / JCM 11019 / LMG 10263 / NCTC 9343 / Onslow / VPI 2553 / EN-2).